The primary structure comprises 693 residues: MPLFADAAARAATLRAEIARHNHAYYVLDTPTIPDAEYDRLFRELQDIEAAHPELLTPDSPTQRVGGAPLPELVPVRHAVPMLSIRTETDTTAQGVRNFDTRVRNALGLGDGDPAVEYLSELKFDGLAISLRYEHGVLVRAATRGDGETGEDVTHNVRTIQQIPLRLHGAAPAVIEVRGEIYMRRDDFEALNNRQREAGDKVFVNPRNAAAGAVRQLDPRIAARRPLSFFAYGLGEHAGFDLPATQAELLTRLAAFGVPVCEHREVSSGPEGLIAFHDRIAALRNELPYDIDGVVYKVNRVDLQRELGFVTREPRWAVAHKYPAQEEITRLAGIDVQVGRTGALTPVARLEPVFVGGVTVTNATLHNQDEIDRKDVRVGDWVIVRRAGDVIPEVVGPVLERRVGEPPRFNLLASYPTCPVCGSHVVRGEDEAVARCSGGLFCPAQRKQALLHFAGRRAMDIEGLGDKLVEQLVDASIVKTPADLYKLGILALANLERMGEKSAQNLLAAIEKSRNTTLARFIFALGIRNVGEATAKDLARHFGSLDALLAADEGALQQVPDVGPVVAKCIAEFFAEAHNVEVVEQLRAAGLRWEEGAPAAPASGSVAGLTFVITGTLPTLSRDEAKALIEAHGGKVSGSVSKKTDYLVAGAEAGSKLAKAQDLGVDIVDEDGLRRLLESGEQSPINNKDGVPE.

NAD(+) contacts are provided by residues 35–39, 84–85, and glutamate 121; these read DAEYD and SI. The N6-AMP-lysine intermediate role is filled by lysine 123. NAD(+) is bound by residues arginine 144, glutamate 180, lysine 297, and lysine 321. Cysteine 418, cysteine 421, cysteine 436, and cysteine 442 together coordinate Zn(2+). Residues 601–690 form the BRCT domain; sequence PASGSVAGLT…EQSPINNKDG (90 aa).

This sequence belongs to the NAD-dependent DNA ligase family. LigA subfamily. It depends on Mg(2+) as a cofactor. Mn(2+) is required as a cofactor.

The catalysed reaction is NAD(+) + (deoxyribonucleotide)n-3'-hydroxyl + 5'-phospho-(deoxyribonucleotide)m = (deoxyribonucleotide)n+m + AMP + beta-nicotinamide D-nucleotide.. Its function is as follows. DNA ligase that catalyzes the formation of phosphodiester linkages between 5'-phosphoryl and 3'-hydroxyl groups in double-stranded DNA using NAD as a coenzyme and as the energy source for the reaction. It is essential for DNA replication and repair of damaged DNA. The chain is DNA ligase from Azoarcus sp. (strain BH72).